Consider the following 314-residue polypeptide: tRNA-cytidine(32) 2-sulfurtransferase (314 aa).

Positions 39–44 match the PP-loop motif motif; it reads SGGKDS. C114, C117, and C205 together coordinate [4Fe-4S] cluster.

The protein belongs to the TtcA family. As to quaternary structure, homodimer. The cofactor is Mg(2+). It depends on [4Fe-4S] cluster as a cofactor.

The protein localises to the cytoplasm. It catalyses the reaction cytidine(32) in tRNA + S-sulfanyl-L-cysteinyl-[cysteine desulfurase] + AH2 + ATP = 2-thiocytidine(32) in tRNA + L-cysteinyl-[cysteine desulfurase] + A + AMP + diphosphate + H(+). Its pathway is tRNA modification. Catalyzes the ATP-dependent 2-thiolation of cytidine in position 32 of tRNA, to form 2-thiocytidine (s(2)C32). The sulfur atoms are provided by the cysteine/cysteine desulfurase (IscS) system. This chain is tRNA-cytidine(32) 2-sulfurtransferase, found in Cupriavidus necator (strain ATCC 17699 / DSM 428 / KCTC 22496 / NCIMB 10442 / H16 / Stanier 337) (Ralstonia eutropha).